The primary structure comprises 261 residues: Uridylate kinase (261 aa).

Positions 1–23 are disordered; sequence MTEPDVAGAPASKPEPASTGAAS. 36-39 is an ATP binding site; that stretch reads KLGG. Position 77 (glycine 77) interacts with UMP. ATP contacts are provided by glycine 78 and arginine 82. UMP is bound by residues aspartate 97 and 158–165; that span reads MGLPYFST. Phenylalanine 191 and aspartate 194 together coordinate ATP.

Belongs to the UMP kinase family. As to quaternary structure, homohexamer.

It is found in the cytoplasm. It catalyses the reaction UMP + ATP = UDP + ADP. Its pathway is pyrimidine metabolism; CTP biosynthesis via de novo pathway; UDP from UMP (UMPK route): step 1/1. With respect to regulation, inhibited by UTP. Its function is as follows. Catalyzes the reversible phosphorylation of UMP to UDP. The polypeptide is Uridylate kinase (Mycobacterium tuberculosis (strain ATCC 25177 / H37Ra)).